Consider the following 379-residue polypeptide: Probable protein phosphatase 2C 46 (379 aa).

The first 20 residues, 1 to 20, serve as a signal peptide directing secretion; the sequence is MLSTLMKLLSACLWPSSSSG. A PPM-type phosphatase domain is found at 42–353; sequence LVGEFSMAVV…DDITVVIIFL (312 aa). Serine 73 is subject to Phosphoserine. Residues aspartate 84, glycine 85, aspartate 285, and aspartate 344 each contribute to the Mn(2+) site.

It belongs to the PP2C family. As to quaternary structure, interacts with SAUR19. The cofactor is Mg(2+). Mn(2+) is required as a cofactor.

The enzyme catalyses O-phospho-L-seryl-[protein] + H2O = L-seryl-[protein] + phosphate. The catalysed reaction is O-phospho-L-threonyl-[protein] + H2O = L-threonyl-[protein] + phosphate. Its function is as follows. May dephosphorylate and repress plasma membrane H(+)-ATPases (PM H(+)-ATPases, e.g. AHA1 and AHA2), thus influencing negatively plant growth and fitness. The sequence is that of Probable protein phosphatase 2C 46 from Arabidopsis thaliana (Mouse-ear cress).